Here is a 239-residue protein sequence, read N- to C-terminus: Probable transcriptional regulatory protein BBR47_14810 (239 aa).

The protein belongs to the TACO1 family. YeeN subfamily.

The protein localises to the cytoplasm. In Brevibacillus brevis (strain 47 / JCM 6285 / NBRC 100599), this protein is Probable transcriptional regulatory protein BBR47_14810.